The chain runs to 389 residues: Trans-2-enoyl-CoA reductase [NADH] (389 aa).

Residues Gly-47 to Tyr-52, Phe-73 to Glu-74, Asp-110 to Ala-111, and Leu-138 to Ala-139 contribute to the NAD(+) site. Position 224 (Tyr-224) interacts with substrate. Tyr-234 serves as the catalytic Proton donor. Residues Lys-243 and Leu-272–Thr-274 each bind NAD(+).

This sequence belongs to the TER reductase family. In terms of assembly, monomer.

The catalysed reaction is a 2,3-saturated acyl-CoA + NAD(+) = a (2E)-enoyl-CoA + NADH + H(+). Its pathway is lipid metabolism; fatty acid biosynthesis. Involved in the fatty acid synthesis (FAS II). Catalyzes the reduction of a carbon-carbon double bond in an enoyl moiety that is covalently linked to a coenzyme A (CoA). This is Trans-2-enoyl-CoA reductase [NADH] from Clostridium perfringens (strain SM101 / Type A).